The following is a 238-amino-acid chain: tRNA (guanine-N(7)-)-methyltransferase (238 aa).

S-adenosyl-L-methionine contacts are provided by Glu62, Glu87, Asp119, and Asp141. Asp141 is a catalytic residue. Substrate-binding positions include Lys145, Asp177, and 216–219 (TRYE).

This sequence belongs to the class I-like SAM-binding methyltransferase superfamily. TrmB family.

It catalyses the reaction guanosine(46) in tRNA + S-adenosyl-L-methionine = N(7)-methylguanosine(46) in tRNA + S-adenosyl-L-homocysteine. Its pathway is tRNA modification; N(7)-methylguanine-tRNA biosynthesis. Its function is as follows. Catalyzes the formation of N(7)-methylguanine at position 46 (m7G46) in tRNA. This Novosphingobium aromaticivorans (strain ATCC 700278 / DSM 12444 / CCUG 56034 / CIP 105152 / NBRC 16084 / F199) protein is tRNA (guanine-N(7)-)-methyltransferase.